A 117-amino-acid polypeptide reads, in one-letter code: Large ribosomal subunit protein uL18 (117 aa).

Belongs to the universal ribosomal protein uL18 family. In terms of assembly, part of the 50S ribosomal subunit; part of the 5S rRNA/L5/L18/L25 subcomplex. Contacts the 5S and 23S rRNAs.

Its function is as follows. This is one of the proteins that bind and probably mediate the attachment of the 5S RNA into the large ribosomal subunit, where it forms part of the central protuberance. In Actinobacillus pleuropneumoniae serotype 5b (strain L20), this protein is Large ribosomal subunit protein uL18.